Here is a 164-residue protein sequence, read N- to C-terminus: Translocator protein homolog (164 aa).

A run of 5 helical transmembrane segments spans residues 16–34 (WSASLVPVACGWFIGNSYK), 52–72 (SAFGPAWTLLYLTMGYASHLA), 89–106 (ILYIAQLAANFAWMPLFY), 112–132 (KLALADLGILTGLVGWLAKTW), and 141–163 (KWLIPYLAWLGYAGYLNLGYCLL).

It belongs to the TspO/BZRP family.

The protein localises to the mitochondrion membrane. May play a role in the transport of porphyrins and heme. This is Translocator protein homolog from Schizosaccharomyces pombe (strain 972 / ATCC 24843) (Fission yeast).